The following is a 117-amino-acid chain: Large ribosomal subunit protein bL20c (117 aa).

Belongs to the bacterial ribosomal protein bL20 family.

Its subcellular location is the plastid. The protein resides in the chloroplast. Functionally, binds directly to 23S ribosomal RNA and is necessary for the in vitro assembly process of the 50S ribosomal subunit. It is not involved in the protein synthesizing functions of that subunit. In Drimys granadensis, this protein is Large ribosomal subunit protein bL20c.